A 157-amino-acid chain; its full sequence is Protein FAM218A (157 aa).

Residues 104-127 (PAVTPPKLPGHSKSEGPPGKVRKR) form a disordered region.

The chain is Protein FAM218A (FAM218A) from Homo sapiens (Human).